A 398-amino-acid polypeptide reads, in one-letter code: O-methyltransferase aoiO (398 aa).

An S-adenosyl-L-methionine-binding site is contributed by Asp-251. His-299 (proton acceptor) is an active-site residue.

The protein belongs to the class I-like SAM-binding methyltransferase superfamily. Cation-independent O-methyltransferase family.

Its function is as follows. O-methyltransferase; part of the gene cluster that mediates the biosynthesis of a methylated derivative of known natural products orthosporin and diaporthin. Seems not to be involved in the biosynthesis of the identified final product of the pathway and its function has still to be determined. In Aspergillus oryzae (strain ATCC 42149 / RIB 40) (Yellow koji mold), this protein is O-methyltransferase aoiO.